Here is a 362-residue protein sequence, read N- to C-terminus: tRNA-specific 2-thiouridylase MnmA (362 aa).

ATP contacts are provided by residues 8 to 15 (AMSGGVDS) and methionine 35. The interaction with target base in tRNA stretch occupies residues 95-97 (NPD). Cysteine 100 serves as the catalytic Nucleophile. Cysteines 100 and 196 form a disulfide. ATP is bound at residue glycine 124. Residues 146 to 148 (KDQ) form an interaction with tRNA region. The active-site Cysteine persulfide intermediate is cysteine 196. The interaction with tRNA stretch occupies residues 303–304 (RY).

The protein belongs to the MnmA/TRMU family.

The protein resides in the cytoplasm. It catalyses the reaction S-sulfanyl-L-cysteinyl-[protein] + uridine(34) in tRNA + AH2 + ATP = 2-thiouridine(34) in tRNA + L-cysteinyl-[protein] + A + AMP + diphosphate + H(+). In terms of biological role, catalyzes the 2-thiolation of uridine at the wobble position (U34) of tRNA, leading to the formation of s(2)U34. This Chlamydia abortus (strain DSM 27085 / S26/3) (Chlamydophila abortus) protein is tRNA-specific 2-thiouridylase MnmA.